A 701-amino-acid chain; its full sequence is Elongation factor G (701 aa).

The 277-residue stretch at 11–287 (TKVRNIGIMA…AVIDYLPSPL (277 aa)) folds into the tr-type G domain. GTP contacts are provided by residues 20-27 (AHIDAGKT), 84-88 (DTPGH), and 138-141 (NKMD).

Belongs to the TRAFAC class translation factor GTPase superfamily. Classic translation factor GTPase family. EF-G/EF-2 subfamily.

Its subcellular location is the cytoplasm. Functionally, catalyzes the GTP-dependent ribosomal translocation step during translation elongation. During this step, the ribosome changes from the pre-translocational (PRE) to the post-translocational (POST) state as the newly formed A-site-bound peptidyl-tRNA and P-site-bound deacylated tRNA move to the P and E sites, respectively. Catalyzes the coordinated movement of the two tRNA molecules, the mRNA and conformational changes in the ribosome. This is Elongation factor G from Mycobacterium avium (strain 104).